Reading from the N-terminus, the 479-residue chain is Anaerobic nitric oxide reductase flavorubredoxin (479 aa).

The segment at 30 to 210 is zinc metallo-hydrolase; it reads LRGSSYNSYL…PFSRLVTPKI (181 aa). Fe cation contacts are provided by H79, E81, D83, H147, D166, and H227. A Flavodoxin-like domain is found at 254 to 393; it reads ITIFYDTMSN…LCREHGREIA (140 aa). Residues 260–264 and 342–369 each bind FMN; these read TMSNN and AFGSHGWSGGAVDRLSTRLQDAGFEMSL. Positions 423–474 constitute a Rubredoxin-like domain; it reads GPRMQCSVCQWIYDPAKGEPMQDVAPGTPWSEVPDNFLCPECSLGKDVFEEL. 4 residues coordinate Fe cation: C428, C431, C461, and C464.

In the N-terminal section; belongs to the zinc metallo-hydrolase group 3 family. Homotetramer. Requires Fe cation as cofactor. FMN is required as a cofactor.

It localises to the cytoplasm. It participates in nitrogen metabolism; nitric oxide reduction. In terms of biological role, anaerobic nitric oxide reductase; uses NADH to detoxify nitric oxide (NO), protecting several 4Fe-4S NO-sensitive enzymes. Has at least 2 reductase partners, only one of which (NorW, flavorubredoxin reductase) has been identified. NO probably binds to the di-iron center; electrons enter from the NorW at rubredoxin and are transferred sequentially to the FMN center and the di-iron center. Also able to function as an aerobic oxygen reductase. The sequence is that of Anaerobic nitric oxide reductase flavorubredoxin from Shigella boydii serotype 4 (strain Sb227).